We begin with the raw amino-acid sequence, 1225 residues long: DNA-directed RNA polymerase subunit beta' (1225 aa).

Zn(2+)-binding residues include Cys60, Cys62, Cys75, and Cys78. Residues Asp450, Asp452, and Asp454 each coordinate Mg(2+). Zn(2+) contacts are provided by Cys818, Cys892, Cys899, and Cys902.

It belongs to the RNA polymerase beta' chain family. In terms of assembly, the RNAP catalytic core consists of 2 alpha, 1 beta, 1 beta' and 1 omega subunit. When a sigma factor is associated with the core the holoenzyme is formed, which can initiate transcription. The cofactor is Mg(2+). Zn(2+) is required as a cofactor.

The enzyme catalyses RNA(n) + a ribonucleoside 5'-triphosphate = RNA(n+1) + diphosphate. Functionally, DNA-dependent RNA polymerase catalyzes the transcription of DNA into RNA using the four ribonucleoside triphosphates as substrates. The polypeptide is DNA-directed RNA polymerase subunit beta' (Streptococcus pneumoniae (strain Hungary19A-6)).